A 512-amino-acid chain; its full sequence is Putative ribose/galactose/methyl galactoside import ATP-binding protein 1 (512 aa).

ABC transporter domains follow at residues 14-251 (IALT…VGRQ) and 262-507 (TSAN…TQRE). ATP is bound at residue 46-53 (GENGAGKS).

Belongs to the ABC transporter superfamily. Carbohydrate importer 2 (CUT2) (TC 3.A.1.2) family.

The protein resides in the cell inner membrane. The catalysed reaction is D-ribose(out) + ATP + H2O = D-ribose(in) + ADP + phosphate + H(+). It catalyses the reaction D-galactose(out) + ATP + H2O = D-galactose(in) + ADP + phosphate + H(+). Part of an ABC transporter complex involved in carbohydrate import. Could be involved in ribose, galactose and/or methyl galactoside import. Responsible for energy coupling to the transport system. The protein is Putative ribose/galactose/methyl galactoside import ATP-binding protein 1 of Burkholderia lata (strain ATCC 17760 / DSM 23089 / LMG 22485 / NCIMB 9086 / R18194 / 383).